Consider the following 61-residue polypeptide: Large ribosomal subunit protein uL29 (61 aa).

Belongs to the universal ribosomal protein uL29 family.

This chain is Large ribosomal subunit protein uL29, found in Xanthomonas campestris pv. campestris (strain 8004).